A 392-amino-acid polypeptide reads, in one-letter code: Iripin-4 (392 aa).

A signal peptide spans 1–16; it reads MRSLATFMSLLTICWG. 3 N-linked (GlcNAc...) asparagine glycosylation sites follow: Asn-104, Asn-130, and Asn-265.

Belongs to the serpin family. As to expression, female salivary gland.

The protein localises to the secreted. Its function is as follows. Serpin with unknown function. Weakly inhibits human granzyme B (GZMB). Acts as a substrate for porcine elastase. This chain is Iripin-4, found in Ixodes ricinus (Common tick).